The chain runs to 310 residues: p-hydroxybenzoic acid efflux pump subunit AaeA (310 aa).

A helical transmembrane segment spans residues 12–32 (AITVVLVILAFIAIFNAWVYY).

It belongs to the membrane fusion protein (MFP) (TC 8.A.1) family.

It is found in the cell inner membrane. Forms an efflux pump with AaeB. In Escherichia coli O7:K1 (strain IAI39 / ExPEC), this protein is p-hydroxybenzoic acid efflux pump subunit AaeA.